The following is a 353-amino-acid chain: Putative 3-oxoacyl-[acyl-carrier-protein] synthase 3 (353 aa).

Active-site residues include Cys122, His268, and Asn299.

This sequence belongs to the thiolase-like superfamily. FabH family. As to quaternary structure, homodimer.

It is found in the cytoplasm. It catalyses the reaction malonyl-[ACP] + acetyl-CoA + H(+) = 3-oxobutanoyl-[ACP] + CO2 + CoA. Its pathway is lipid metabolism; fatty acid biosynthesis. Functionally, may catalyze the condensation reaction of fatty acid synthesis by the addition to an acyl acceptor of two carbons from malonyl-ACP. The sequence is that of Putative 3-oxoacyl-[acyl-carrier-protein] synthase 3 from Campylobacter jejuni subsp. jejuni serotype O:2 (strain ATCC 700819 / NCTC 11168).